The following is a 105-amino-acid chain: Large ribosomal subunit protein uL24 (105 aa).

This sequence belongs to the universal ribosomal protein uL24 family. As to quaternary structure, part of the 50S ribosomal subunit.

Functionally, one of two assembly initiator proteins, it binds directly to the 5'-end of the 23S rRNA, where it nucleates assembly of the 50S subunit. In terms of biological role, one of the proteins that surrounds the polypeptide exit tunnel on the outside of the subunit. The chain is Large ribosomal subunit protein uL24 from Xylella fastidiosa (strain M12).